A 220-amino-acid chain; its full sequence is Probable nicotinate-nucleotide adenylyltransferase (220 aa).

Belongs to the NadD family.

It carries out the reaction nicotinate beta-D-ribonucleotide + ATP + H(+) = deamido-NAD(+) + diphosphate. It functions in the pathway cofactor biosynthesis; NAD(+) biosynthesis; deamido-NAD(+) from nicotinate D-ribonucleotide: step 1/1. Functionally, catalyzes the reversible adenylation of nicotinate mononucleotide (NaMN) to nicotinic acid adenine dinucleotide (NaAD). This chain is Probable nicotinate-nucleotide adenylyltransferase, found in Yersinia enterocolitica serotype O:8 / biotype 1B (strain NCTC 13174 / 8081).